Consider the following 264-residue polypeptide: Stage IV sporulation protein FA (264 aa).

Residues Met-1–Lys-10 are compositionally biased toward basic and acidic residues. Positions Met-1–Pro-37 are disordered. The Mother cell cytoplasmic segment spans residues Met-1–Ser-72. Polar residues predominate over residues Leu-19–Ser-31. Residues Ile-73–Ala-90 form a helical membrane-spanning segment. Residues Tyr-91–Glu-264 are Forespore intermembrane space-facing.

In terms of assembly, forms a complex with BofA and SpoIVFB localized in the mother-cell membrane surrounding the forespore. Post-translationally, may be degraded by FtsH. It is stabilized by an ftsH disruption mutant, and in a probably independent fashion, by overexpression of BofA.

It localises to the forespore outer membrane. Implicated in the coupling of mother cell to forespore gene expression. Required for spore formation at 37 degrees Celsius, but not at 30 degrees Celsius. SpoIVFA plays a central role in both maintaining the SpoIVFA/BofA/SpoIVFB complex and anchoring it to the outer forespore membrane. SpoIVFA brings BofA into close proximity to SpoIVFB, allowing BofA to inhibit SpoIVFB. Increased accumulation of SpoIVFA seems to inhibit the activity of SpoIVFB and thus regulates the activation of sigma-K. This is Stage IV sporulation protein FA (spoIVFA) from Bacillus subtilis (strain 168).